A 372-amino-acid polypeptide reads, in one-letter code: Aminomethyltransferase (372 aa).

This sequence belongs to the GcvT family. As to quaternary structure, the glycine cleavage system is composed of four proteins: P, T, L and H.

The catalysed reaction is N(6)-[(R)-S(8)-aminomethyldihydrolipoyl]-L-lysyl-[protein] + (6S)-5,6,7,8-tetrahydrofolate = N(6)-[(R)-dihydrolipoyl]-L-lysyl-[protein] + (6R)-5,10-methylene-5,6,7,8-tetrahydrofolate + NH4(+). Its function is as follows. The glycine cleavage system catalyzes the degradation of glycine. This chain is Aminomethyltransferase, found in Burkholderia mallei (strain NCTC 10247).